The primary structure comprises 231 residues: 7-cyano-7-deazaguanine synthase (231 aa).

8–18 (FSGGQDSTTCL) is an ATP binding site. 4 residues coordinate Zn(2+): cysteine 188, cysteine 197, cysteine 200, and cysteine 203.

It belongs to the QueC family. It depends on Zn(2+) as a cofactor.

It catalyses the reaction 7-carboxy-7-deazaguanine + NH4(+) + ATP = 7-cyano-7-deazaguanine + ADP + phosphate + H2O + H(+). It functions in the pathway purine metabolism; 7-cyano-7-deazaguanine biosynthesis. Catalyzes the ATP-dependent conversion of 7-carboxy-7-deazaguanine (CDG) to 7-cyano-7-deazaguanine (preQ(0)). The protein is 7-cyano-7-deazaguanine synthase of Shigella flexneri serotype 5b (strain 8401).